The chain runs to 635 residues: Chaperone protein HtpG (635 aa).

Residues 1–343 (MSVETQKETL…SNDLSLNVSR (343 aa)) are a; substrate-binding. Residues 344-560 (EILQKDPIID…EQDMGLQMRQ (217 aa)) form a b region. The tract at residues 561–635 (ILEASGQKVP…LNKLLVELSV (75 aa)) is c.

It belongs to the heat shock protein 90 family. Homodimer.

It is found in the cytoplasm. Its function is as follows. Molecular chaperone. Has ATPase activity. This chain is Chaperone protein HtpG, found in Pseudomonas syringae pv. tomato (strain ATCC BAA-871 / DC3000).